Consider the following 325-residue polypeptide: Beta-ketoacyl-[acyl-carrier-protein] synthase III (325 aa).

Active-site residues include Cys-119 and His-252. Residues 253-257 are ACP-binding; the sequence is QANLR. Asn-282 is an active-site residue.

Belongs to the thiolase-like superfamily. FabH family. As to quaternary structure, homodimer.

The protein resides in the cytoplasm. The enzyme catalyses malonyl-[ACP] + acetyl-CoA + H(+) = 3-oxobutanoyl-[ACP] + CO2 + CoA. It functions in the pathway lipid metabolism; fatty acid biosynthesis. Its function is as follows. Catalyzes the condensation reaction of fatty acid synthesis by the addition to an acyl acceptor of two carbons from malonyl-ACP. Catalyzes the first condensation reaction which initiates fatty acid synthesis and may therefore play a role in governing the total rate of fatty acid production. Possesses both acetoacetyl-ACP synthase and acetyl transacylase activities. Its substrate specificity determines the biosynthesis of branched-chain and/or straight-chain of fatty acids. This chain is Beta-ketoacyl-[acyl-carrier-protein] synthase III, found in Polaromonas naphthalenivorans (strain CJ2).